The following is a 70-amino-acid chain: Large ribosomal subunit protein bL31 (70 aa).

The Zn(2+) site is built by Cys16, Cys18, Cys37, and Cys40.

This sequence belongs to the bacterial ribosomal protein bL31 family. Type A subfamily. In terms of assembly, part of the 50S ribosomal subunit. The cofactor is Zn(2+).

In terms of biological role, binds the 23S rRNA. This is Large ribosomal subunit protein bL31 from Shewanella amazonensis (strain ATCC BAA-1098 / SB2B).